The chain runs to 315 residues: Serine/threonine-protein phosphatase PP2A catalytic subunit 3 (315 aa).

Mn(2+) is bound by residues Asp62, His64, Asp90, and Asn122. His123 acts as the Proton donor in catalysis. Positions 172 and 247 each coordinate Mn(2+). Residues 294–315 (QFEPAPRENEPHTTRRVPDYFL) are disordered. Residues 298–315 (APRENEPHTTRRVPDYFL) show a composition bias toward basic and acidic residues. The residue at position 315 (Leu315) is a Leucine methyl ester.

The protein belongs to the PPP phosphatase family. PP-2A subfamily. Requires Mn(2+) as cofactor. Post-translationally, reversibly methyl esterified on Leu-315 by leucine carboxyl methyltransferase 1 (PPM1) and protein phosphatase methylesterase 1 (PPE1). Carboxyl methylation influences the affinity of the catalytic subunit for the different regulatory subunits, thereby modulating the PP2A holoenzyme's substrate specificity, enzyme activity and cellular localization.

It carries out the reaction O-phospho-L-seryl-[protein] + H2O = L-seryl-[protein] + phosphate. The catalysed reaction is O-phospho-L-threonyl-[protein] + H2O = L-threonyl-[protein] + phosphate. This Paramecium tetraurelia protein is Serine/threonine-protein phosphatase PP2A catalytic subunit 3 (Ppn3).